We begin with the raw amino-acid sequence, 465 residues long: 3-isopropylmalate dehydratase large subunit (465 aa).

Positions 347, 407, and 410 each coordinate [4Fe-4S] cluster. Positions 416-443 (DTLRPGERSASTSNRNFEGRQGPGGRTH) are disordered.

This sequence belongs to the aconitase/IPM isomerase family. LeuC type 1 subfamily. Heterodimer of LeuC and LeuD. It depends on [4Fe-4S] cluster as a cofactor.

The catalysed reaction is (2R,3S)-3-isopropylmalate = (2S)-2-isopropylmalate. The protein operates within amino-acid biosynthesis; L-leucine biosynthesis; L-leucine from 3-methyl-2-oxobutanoate: step 2/4. In terms of biological role, catalyzes the isomerization between 2-isopropylmalate and 3-isopropylmalate, via the formation of 2-isopropylmaleate. This Frankia alni (strain DSM 45986 / CECT 9034 / ACN14a) protein is 3-isopropylmalate dehydratase large subunit.